The chain runs to 120 residues: Fumarate reductase subunit D (120 aa).

The next 3 membrane-spanning stretches (helical) occupy residues 25 to 45 (FAML…LGVI), 55 to 75 (VAGF…ISMP), and 100 to 120 (IACY…IFMI).

The protein belongs to the FrdD family. In terms of assembly, part of an enzyme complex containing four subunits: a flavoprotein (FrdA), an iron-sulfur protein (FrdB), and two hydrophobic anchor proteins (FrdC and FrdD).

It is found in the cell inner membrane. Its function is as follows. Anchors the catalytic components of the fumarate reductase complex to the cell membrane, binds quinones. In Aliivibrio fischeri (strain MJ11) (Vibrio fischeri), this protein is Fumarate reductase subunit D.